A 226-amino-acid chain; its full sequence is Potassium/proton antiporter CemA (226 aa).

Helical transmembrane passes span 7-27 (FTSL…SLSF), 111-131 (IICF…LFIL), and 186-206 (IISG…KYWI).

This sequence belongs to the CemA family.

The protein localises to the plastid. The protein resides in the chloroplast inner membrane. The enzyme catalyses K(+)(in) + H(+)(out) = K(+)(out) + H(+)(in). In terms of biological role, contributes to K(+)/H(+) antiport activity by supporting proton efflux to control proton extrusion and homeostasis in chloroplasts in a light-dependent manner to modulate photosynthesis. Prevents excessive induction of non-photochemical quenching (NPQ) under continuous-light conditions. Indirectly promotes efficient inorganic carbon uptake into chloroplasts. This Buxus microphylla (Littleleaf boxwood) protein is Potassium/proton antiporter CemA.